Here is a 399-residue protein sequence, read N- to C-terminus: uncharacterized protein (399 aa).

Residues 1-8 lie on the Cytoplasmic side of the membrane; the sequence is MHNLQVRR. Residues 9-35 form a helical membrane-spanning segment; that stretch reads HYAALKGFYLFAFLGTGSIIPLLSMYL. At 36-42 the chain is on the extracellular side; it reads TKEQHLS. The chain crosses the membrane as a helical span at residues 43–71; it reads GSQVGLIMSLGPIVMIFFQPFWGMLSDYT. Topologically, residues 72–75 are cytoplasmic; the sequence is QKTK. Residues 76–101 traverse the membrane as a helical segment; that stretch reads GLLAVCTSITGIIGLAYIAFDSFPLF. Residues 102 to 105 are Extracellular-facing; it reads ILIA. Residues 106-123 form a helical membrane-spanning segment; it reads ACFAAFQSTIIPLSDSIS. At 124-134 the chain is on the cytoplasmic side; sequence LRYTQETNGNY. The helical transmembrane segment at 135-157 threads the bilayer; it reads GGIRLFGSLGFGVAVFAMGQVTN. Residues 158–160 are Extracellular-facing; it reads QLY. A helical transmembrane segment spans residues 161–180; the sequence is PIHVIFIFGCAFLCIAAILA. Residues 181–210 are Cytoplasmic-facing; it reads SQVPGQQKTTKVNIRKGFRELISNKTFLIF. Residues 211–230 form a helical membrane-spanning segment; the sequence is MIITFTTFAPNLANNTYFSL. At 231-234 the chain is on the extracellular side; sequence FLDK. A helical transmembrane segment spans residues 235-259; that stretch reads SGASLSAIGILFFIGVISEIPFMRF. Residues 260–269 are Cytoplasmic-facing; it reads AQTFIDKMGL. Residues 270–289 traverse the membrane as a helical segment; sequence LNVIMLSGGVSLFRWALYFT. Topologically, residues 290 to 292 are extracellular; that stretch reads APS. The helical transmembrane segment at 293 to 315 threads the bilayer; that stretch reads LWIIYATVFLQGVAIGLFIPAAL. The Cytoplasmic segment spans residues 316-327; the sequence is QYVKKITPRHVE. The chain crosses the membrane as a helical span at residues 328 to 355; the sequence is ATALTMYAAIGNGFGNWFCTFAGGYIFD. At 356–358 the chain is on the extracellular side; the sequence is YVS. Residues 359-379 form a helical membrane-spanning segment; the sequence is IFAVYLLFGILSIAGFGLTLY. Over 380–399 the chain is Cytoplasmic; that stretch reads LMKAEKNKHTLHQPAVTFKP.

The protein belongs to the major facilitator superfamily.

Its subcellular location is the cell membrane. This is an uncharacterized protein from Bacillus subtilis (strain 168).